A 371-amino-acid chain; its full sequence is Macronuclear solute carrier homolog CR-MSC (371 aa).

Solcar repeat units lie at residues 16 to 111, 120 to 208, and 215 to 304; these read RMNY…FYDK, ARPD…CKEN, and PHWI…LSQF. Helical transmembrane passes span 22-42, 89-109, 126-146, 184-204, 221-241, and 281-301; these read FAAA…LDMV, TFFF…GYFY, VAAG…IDIV, AGAN…IYDW, LWGT…FDMI, and FGSF…ICYL.

Belongs to the mitochondrial carrier (TC 2.A.29) family.

It is found in the membrane. The polypeptide is Macronuclear solute carrier homolog CR-MSC (Oxytricha trifallax (Sterkiella histriomuscorum)).